The primary structure comprises 388 residues: Cdc42 effector protein 1 (388 aa).

Positions 1–28 (MPGPQGGTGAPSMSLGKLSPVGWVPSSH) are disordered. Phosphoserine occurs at positions 19 and 27. T34 is subject to Phosphothreonine. Residues 38–52 (ISPPLGDFRHTMHVG) enclose the CRIB domain. S39 bears the Phosphoserine mark. Position 53 is an omega-N-methylarginine (R53). Phosphoserine is present on residues S65, S77, S101, S113, S121, and S139. The segment at 165-206 (RLPRVEKHSSRDRDHDRDPDHSQDREQSSSPSEPNPNPELRR) is disordered. A compositionally biased stretch (basic and acidic residues) spans 167–191 (PRVEKHSSRDRDHDRDPDHSQDREQ). Phosphoserine occurs at positions 193, 207, 209, and 212. 2 repeat units span residues 237–243 (PAANPPA) and 250–256 (PTAKPPA). Residues 237-257 (PAANPPAPAANPAPTAKPPAD) form a disordered region. Residues 237 to 270 (PAANPPAPAANPAPTAKPPADAVTTLDTVTSLPA) are 2 X 7 AA tandem repeats of [PT]-[AT]-A-[ENT]-[PT]-[PTS]-[AG]. Pro residues predominate over residues 239–253 (ANPPAPAANPAPTAK). Phosphoserine is present on residues S298, S318, S347, and S350.

The protein belongs to the BORG/CEP family. As to quaternary structure, interacts with RHOQ and CDC42, in a GTP-dependent manner.

It localises to the endomembrane system. Its subcellular location is the cytoplasm. The protein resides in the cytoskeleton. In terms of biological role, probably involved in the organization of the actin cytoskeleton. Induced membrane extensions in fibroblasts. The chain is Cdc42 effector protein 1 from Rattus norvegicus (Rat).